The primary structure comprises 341 residues: Glycerol-3-phosphate dehydrogenase [NAD(P)+] (341 aa).

NADPH is bound by residues S11, W12, R33, and K106. Residues K106, G137, and S139 each contribute to the sn-glycerol 3-phosphate site. Position 141 (A141) interacts with NADPH. Positions 192, 245, 255, 256, and 257 each coordinate sn-glycerol 3-phosphate. K192 functions as the Proton acceptor in the catalytic mechanism. R256 contributes to the NADPH binding site. NADPH is bound by residues V280 and E282.

The protein belongs to the NAD-dependent glycerol-3-phosphate dehydrogenase family.

The protein resides in the cytoplasm. The catalysed reaction is sn-glycerol 3-phosphate + NAD(+) = dihydroxyacetone phosphate + NADH + H(+). It carries out the reaction sn-glycerol 3-phosphate + NADP(+) = dihydroxyacetone phosphate + NADPH + H(+). It participates in membrane lipid metabolism; glycerophospholipid metabolism. Its function is as follows. Catalyzes the reduction of the glycolytic intermediate dihydroxyacetone phosphate (DHAP) to sn-glycerol 3-phosphate (G3P), the key precursor for phospholipid synthesis. This chain is Glycerol-3-phosphate dehydrogenase [NAD(P)+], found in Bacillus cytotoxicus (strain DSM 22905 / CIP 110041 / 391-98 / NVH 391-98).